The primary structure comprises 191 residues: Ankyrin repeat domain-containing protein 22 (191 aa).

4 ANK repeats span residues 39 to 68 (NGDTPLICACRRGHLRIVSFLLRRNADVNL), 72 to 100 (KERTCLHYAVKKRFTFFDYLLIILLMPVL), 101 to 130 (LIGYFLMVSKTKQNETLVRMLLNAGVEVNA), and 134 to 163 (DGYTALHYACQMKNQTLIPLLLEAHADPMI).

This is Ankyrin repeat domain-containing protein 22 (Ankrd22) from Mus musculus (Mouse).